Reading from the N-terminus, the 186-residue chain is Peptidyl-tRNA hydrolase (186 aa).

A tRNA-binding site is contributed by tyrosine 16. Histidine 21 functions as the Proton acceptor in the catalytic mechanism. TRNA-binding residues include tyrosine 66, asparagine 68, and asparagine 114.

The protein belongs to the PTH family. In terms of assembly, monomer.

It is found in the cytoplasm. It catalyses the reaction an N-acyl-L-alpha-aminoacyl-tRNA + H2O = an N-acyl-L-amino acid + a tRNA + H(+). Hydrolyzes ribosome-free peptidyl-tRNAs (with 1 or more amino acids incorporated), which drop off the ribosome during protein synthesis, or as a result of ribosome stalling. Its function is as follows. Catalyzes the release of premature peptidyl moieties from peptidyl-tRNA molecules trapped in stalled 50S ribosomal subunits, and thus maintains levels of free tRNAs and 50S ribosomes. The chain is Peptidyl-tRNA hydrolase from Ureaplasma parvum serovar 3 (strain ATCC 700970).